Consider the following 1411-residue polypeptide: MKDLLNLFNQQRQTLDFDAIKIGLASPALIRSWSFGEVKKPETINYRTFKPERDGLFCAAIFGPIKDYECLCGKYKRMKHRGVVCEKCGTEVTLAKVRRERMGCIELASPVAHIWFLKSLPSRIGLMLDMTLRDIERVLYFEAYVVTEPGLTPLERRQLLTEEQYLQARQEHADDFDASMGAEAVYELLRMIDLQSEMARLREEIVVTGSETKLKRLTKRIKLIEAFIESGNRPEWMILTVLPVLPPDLRPLVPLDGGRFATSDLNDLYRRVINRNNRLCRLLELSAPDIIVRNEKRMLQESVDALLDNGRRGRAITGTNKRPLKSLADMIKGKQGRFRQNLLGKRVDYSARSVIIVGPNLRLHQCGLPKKMALELFKPFVFAKLQRRGLATTIKGAKKLVEREEAEVWDILEEVIFEHPVVLNRAPTLHRQGIQAFEPVLIEGKAIQLHPLVCTAFNADFDGDQMAVHVPLSLEAQLEARALMMSTNNILSPANGEPIIVPSQDVVLGLYYMSRALENKKGEGMVFANTSELKRAYDNSVVELHAKVKVRITEIETDDQGLRNKASSIVDTTVGRALLSEILPEGLPFVLVNTEMTKKNISRLINSSYRMLGLKETVVFADKLMYTGYAYATRAGVSICIDDMLIPLEKKEILGEAEQEVLEIQEQYQSGLVTAGERYNKVVDIWSRTNERIAKAMMDTIGTEKVVNTDGEIVDQKSMNSLYIMADSGARGSPQQIRQLAAMRGLMVRPDGSIIETPIKANFREGLSVQEYFNSTHGARKGLADTALKTANSGYLTRRLVDVTQDLCVVQLDCGTAGGLTMTPIVEGGDVVEPLKDRVLGRVVAEDVLLPGNDDEPIVTRSTLLDEQWVAKLEEAGVQSVKVRSPITCESPFGVCALCYGRDLARGHLVNMGEAVGVIAAQSIGEPGTQLTMRTFHIGGTALSAAAIDNIAVKTSGSVKFTNLKYVEHANGTLVAVSRSGEISVLDTHGRERERYKLPYGATINVKDMAEVKSGQILANWDPHNHPIVSEVAGFVRFIDFVDGVTVIEKTDDLTGLSSREIADLKRRGSQGKDLRPLVRIVDKKGNDLTIPGTDLSAQYLLPPRSIVNLQDGAPVGIGDVVAKIPQEASKTRDITGGLPRVADLFEARRPKDPAILAERSGVISFGKDTKGKQRLIIKDADGSEHEELIPKYRQIIVFEGEHVTKGETIVDGEPSPQDILRLLGIEPLAAYLVKEIQDVYRLQGVKINDKHIEVITRQMLRKVEIVDQGNSKFLNGEQVERQRVIDENAKLIARNELPAKYNPVLLGITKASLATESFISAASFQETTRVLTEAAVRGTRDNLRGLKENVIVGRLIPAGTGQTYHSQRRYSSVGLTESEMETLVGRSTSSGTEITSPSKDAIPLGSKVGF.

Zn(2+) is bound by residues Cys-70, Cys-72, Cys-85, and Cys-88. Mg(2+)-binding residues include Asp-460, Asp-462, and Asp-464. Zn(2+)-binding residues include Cys-814, Cys-889, Cys-896, and Cys-899. Residues 1387-1399 (RSTSSGTEITSPS) are compositionally biased toward polar residues. A disordered region spans residues 1387–1411 (RSTSSGTEITSPSKDAIPLGSKVGF).

It belongs to the RNA polymerase beta' chain family. As to quaternary structure, the RNAP catalytic core consists of 2 alpha, 1 beta, 1 beta' and 1 omega subunit. When a sigma factor is associated with the core the holoenzyme is formed, which can initiate transcription. Mg(2+) serves as cofactor. It depends on Zn(2+) as a cofactor.

The catalysed reaction is RNA(n) + a ribonucleoside 5'-triphosphate = RNA(n+1) + diphosphate. In terms of biological role, DNA-dependent RNA polymerase catalyzes the transcription of DNA into RNA using the four ribonucleoside triphosphates as substrates. The protein is DNA-directed RNA polymerase subunit beta' of Xylella fastidiosa (strain M12).